We begin with the raw amino-acid sequence, 131 residues long: D-ribose pyranase (131 aa).

The Proton donor role is filled by H20. Residues D28, H98, and 120 to 122 (YSN) each bind substrate.

The protein belongs to the RbsD / FucU family. RbsD subfamily. In terms of assembly, homodecamer.

It is found in the cytoplasm. The enzyme catalyses beta-D-ribopyranose = beta-D-ribofuranose. The protein operates within carbohydrate metabolism; D-ribose degradation; D-ribose 5-phosphate from beta-D-ribopyranose: step 1/2. In terms of biological role, catalyzes the interconversion of beta-pyran and beta-furan forms of D-ribose. This is D-ribose pyranase from Limosilactobacillus fermentum (strain NBRC 3956 / LMG 18251) (Lactobacillus fermentum).